The following is a 939-amino-acid chain: Translation initiation factor IF-2 (939 aa).

The disordered stretch occupies residues 48–355; the sequence is KFAPAPKVEN…KPEKKEKEEE (308 aa). A compositionally biased stretch (low complexity) spans 79-93; that stretch reads QQNQAPKQPQQGTQN. The span at 114-130 shows a compositional bias: basic and acidic residues; it reads SRDKNSRRDNNNRDGQR. Residues 131 to 257 are compositionally biased toward low complexity; sequence DNNGGYRNND…NNDRNNNGGF (127 aa). The span at 287-355 shows a compositional bias: basic and acidic residues; the sequence is RNNDRRDSAP…KPEKKEKEEE (69 aa). A tr-type G domain is found at 440–609; the sequence is PRPPVVCVMG…LLTAEVNELK (170 aa). The tract at residues 449-456 is G1; that stretch reads GHVDHGKT. 449-456 serves as a coordination point for GTP; sequence GHVDHGKT. A G2 region spans residues 474-478; sequence GITQK. The G3 stretch occupies residues 495–498; sequence DTPG. GTP is bound by residues 495-499 and 549-552; these read DTPGH and NKID. The G4 stretch occupies residues 549 to 552; it reads NKID. The interval 585–587 is G5; sequence SAH.

It belongs to the TRAFAC class translation factor GTPase superfamily. Classic translation factor GTPase family. IF-2 subfamily.

It localises to the cytoplasm. Its function is as follows. One of the essential components for the initiation of protein synthesis. Protects formylmethionyl-tRNA from spontaneous hydrolysis and promotes its binding to the 30S ribosomal subunits. Also involved in the hydrolysis of GTP during the formation of the 70S ribosomal complex. The polypeptide is Translation initiation factor IF-2 (Lachnospira eligens (strain ATCC 27750 / DSM 3376 / VPI C15-48 / C15-B4) (Eubacterium eligens)).